A 794-amino-acid chain; its full sequence is LPS-assembly protein LptD (794 aa).

A signal peptide spans 1–31 (MPSHCSSLLCARFRLSSLAVIVALAASGVRA).

The protein belongs to the LptD family. As to quaternary structure, component of the lipopolysaccharide transport and assembly complex. Interacts with LptE and LptA.

The protein localises to the cell outer membrane. In terms of biological role, together with LptE, is involved in the assembly of lipopolysaccharide (LPS) at the surface of the outer membrane. The protein is LPS-assembly protein LptD of Marinobacter nauticus (strain ATCC 700491 / DSM 11845 / VT8) (Marinobacter aquaeolei).